A 600-amino-acid chain; its full sequence is Adenine deaminase (600 aa).

Belongs to the metallo-dependent hydrolases superfamily. Adenine deaminase family. Requires Mn(2+) as cofactor.

The catalysed reaction is adenine + H2O + H(+) = hypoxanthine + NH4(+). This Bradyrhizobium sp. (strain BTAi1 / ATCC BAA-1182) protein is Adenine deaminase.